The following is a 1215-amino-acid chain: Zinc finger E-box-binding homeobox 2 (1215 aa).

Residues 1-111 are disordered; the sequence is MKQPIMADGP…ILQASVAGPE (111 aa). Residues 12 to 24 show a composition bias toward basic residues; it reads CKRRKQANPRRKN. Positions 57-74 are enriched in polar residues; the sequence is DQDTSPASMPNHESSPHM. The span at 89-98 shows a compositional bias: basic and acidic residues; the sequence is RESVVEHSWH. Serine 142 carries the post-translational modification Phosphoserine. 3 consecutive C2H2-type zinc fingers follow at residues 211 to 234, 241 to 263, and 282 to 304; these read LTCP…KYRH, FSCP…MVTH, and FKCT…LRIH. The segment at 310–334 adopts a C2H2-type 4; atypical zinc-finger fold; the sequence is YECPNCKKRFSHSGSYSSHISSKKC. Residues serine 356, serine 360, and serine 364 each carry the phosphoserine modification. Lysine 377 is subject to N6-acetyllysine. A Glycyl lysine isopeptide (Lys-Gly) (interchain with G-Cter in SUMO); alternate cross-link involves residue lysine 391. Residue lysine 391 forms a Glycyl lysine isopeptide (Lys-Gly) (interchain with G-Cter in SUMO2); alternate linkage. The SMAD-MH2 binding domain stretch occupies residues 437-487; that stretch reads QHLGVGMEAPLLGFPTMNSNLSEVQKVLQIVDNTVSRQKMDCKTEDISKLK. Residues lysine 479 and lysine 555 each participate in a glycyl lysine isopeptide (Lys-Gly) (interchain with G-Cter in SUMO2) cross-link. Residues 581 to 605 form a C2H2-type 5; degenerate zinc finger; it reads FSCQFCKESFPGPIPLHQHERYLCK. Glycyl lysine isopeptide (Lys-Gly) (interchain with G-Cter in SUMO2) cross-links involve residues lysine 611 and lysine 632. The segment at residues 644 to 703 is a DNA-binding region (homeobox; atypical); the sequence is GLTSPINPYKDHMSVLKAYYAMNMEPNSDELLKISIAVGLPQEFVKEWFEQRKVYQYSNS. The residue at position 647 (serine 647) is a Phosphoserine. 2 disordered regions span residues 702-740 and 772-811; these read NSRS…DSIT and VDKL…SEEL. Lysine 713 participates in a covalent cross-link: Glycyl lysine isopeptide (Lys-Gly) (interchain with G-Cter in SUMO2). A phosphoserine mark is found at serine 731 and serine 780. Residues 780–808 show a composition bias toward low complexity; that stretch reads SNTPSPLNLSSTSSKNSHSSSYTPNSFSS. Phosphothreonine is present on threonine 782. Serine 784 bears the Phosphoserine mark. Lysine 866 is covalently cross-linked (Glycyl lysine isopeptide (Lys-Gly) (interchain with G-Cter in SUMO); alternate). Residue lysine 866 forms a Glycyl lysine isopeptide (Lys-Gly) (interchain with G-Cter in SUMO2); alternate linkage. C2H2-type zinc fingers lie at residues 999 to 1021 and 1027 to 1049; these read YACD…KYEH and HQCQ…SRLH. The C2H2-type 8; atypical zinc finger occupies 1055-1076; the sequence is YQCDKCGKRFSHSGSYSQHMNH. A disordered region spans residues 1117-1215; the sequence is TPQGYSDSEE…EEDNMEDGME (99 aa). Residues serine 1122 and serine 1124 each carry the phosphoserine modification. A compositionally biased stretch (basic and acidic residues) spans 1127–1149; the sequence is RESMPRDGESEKEHEKEGEEGYG. Positions 1157 to 1167 are enriched in acidic residues; the sequence is DEEEEEEEEES. Composition is skewed to basic and acidic residues over residues 1168–1179 and 1186–1205; these read ENKSMDTDPETI and GDHS…KSDH. The residue at position 1203 (serine 1203) is a Phosphoserine. The segment covering 1206 to 1215 has biased composition (acidic residues); it reads EEDNMEDGME.

This sequence belongs to the delta-EF1/ZFH-1 C2H2-type zinc-finger family. Interacts with CBX4 and CTBP1. Binds activated SMAD1, activated SMAD2 and activated SMAD3; binding with SMAD4 is not detected. In terms of processing, sumoylation on Lys-391 and Lys-866 is promoted by the E3 SUMO-protein ligase CBX4, and impairs interaction with CTBP1 and transcription repression activity.

It localises to the nucleus. The protein localises to the chromosome. Its function is as follows. Transcriptional inhibitor that binds to DNA sequence 5'-CACCT-3' in different promoters. Represses transcription of E-cadherin. Represses expression of MEOX2. This is Zinc finger E-box-binding homeobox 2 (Zeb2) from Mus musculus (Mouse).